The following is a 254-amino-acid chain: Nickel import ATP-binding protein NikD (254 aa).

One can recognise an ABC transporter domain in the interval 2–241 (PQQIELRNIA…PKHAVTRSLV (240 aa)). 36–43 (GGSGSGKS) serves as a coordination point for ATP.

This sequence belongs to the ABC transporter superfamily. Nickel importer (TC 3.A.1.5.3) family. In terms of assembly, the complex is composed of two ATP-binding proteins (NikD and NikE), two transmembrane proteins (NikB and NikC) and a solute-binding protein (NikA).

It localises to the cell inner membrane. It catalyses the reaction Ni(2+)(out) + ATP + H2O = Ni(2+)(in) + ADP + phosphate + H(+). Its function is as follows. Part of the ABC transporter complex NikABCDE involved in nickel import. Responsible for energy coupling to the transport system. The polypeptide is Nickel import ATP-binding protein NikD (Escherichia coli O157:H7).